Reading from the N-terminus, the 223-residue chain is Urease accessory protein UreF (223 aa).

Belongs to the UreF family. As to quaternary structure, ureD, UreF and UreG form a complex that acts as a GTP-hydrolysis-dependent molecular chaperone, activating the urease apoprotein by helping to assemble the nickel containing metallocenter of UreC. The UreE protein probably delivers the nickel.

Its subcellular location is the cytoplasm. Its function is as follows. Required for maturation of urease via the functional incorporation of the urease nickel metallocenter. This is Urease accessory protein UreF from Paenarthrobacter aurescens (strain TC1).